The primary structure comprises 312 residues: Erlin (312 aa).

At 1–3 the chain is on the cytoplasmic side; the sequence is MLT. Residues 4 to 24 form a helical membrane-spanning segment; the sequence is ELALGLFALWIAIFSQALHKI. Residues 25–312 are Lumenal-facing; it reads EEGHVGVYYR…FVMGTTQQTV (288 aa). Residue N104 is glycosylated (N-linked (GlcNAc...) asparagine).

This sequence belongs to the band 7/mec-2 family. In terms of assembly, seems to form a multimeric complex. As to expression, expressed in the germline only.

It localises to the endoplasmic reticulum membrane. This chain is Erlin, found in Caenorhabditis elegans.